The chain runs to 151 residues: Methylated-DNA--protein-cysteine methyltransferase (151 aa).

Catalysis depends on Cys-119, which acts as the Nucleophile; methyl group acceptor.

This sequence belongs to the MGMT family.

The protein resides in the cytoplasm. It catalyses the reaction a 6-O-methyl-2'-deoxyguanosine in DNA + L-cysteinyl-[protein] = S-methyl-L-cysteinyl-[protein] + a 2'-deoxyguanosine in DNA. The enzyme catalyses a 4-O-methyl-thymidine in DNA + L-cysteinyl-[protein] = a thymidine in DNA + S-methyl-L-cysteinyl-[protein]. Involved in the cellular defense against the biological effects of O6-methylguanine (O6-MeG) and O4-methylthymine (O4-MeT) in DNA. Repairs the methylated nucleobase in DNA by stoichiometrically transferring the methyl group to a cysteine residue in the enzyme. This is a suicide reaction: the enzyme is irreversibly inactivated. The chain is Methylated-DNA--protein-cysteine methyltransferase from Saccharolobus islandicus (strain M.16.27) (Sulfolobus islandicus).